The following is a 571-amino-acid chain: Urease subunit alpha (571 aa).

One can recognise a Urease domain in the interval 133-571 (GGIDTHVHFI…LPLTQRYFLF (439 aa)). Residues histidine 138, histidine 140, and lysine 221 each coordinate Ni(2+). At lysine 221 the chain carries N6-carboxylysine. Histidine 223 serves as a coordination point for substrate. Histidine 250 and histidine 276 together coordinate Ni(2+). Histidine 324 functions as the Proton donor in the catalytic mechanism. Aspartate 364 is a binding site for Ni(2+).

It belongs to the metallo-dependent hydrolases superfamily. Urease alpha subunit family. Heterotrimer of UreA (gamma), UreB (beta) and UreC (alpha) subunits. Three heterotrimers associate to form the active enzyme. Ni cation is required as a cofactor. Carboxylation allows a single lysine to coordinate two nickel ions.

Its subcellular location is the cytoplasm. The enzyme catalyses urea + 2 H2O + H(+) = hydrogencarbonate + 2 NH4(+). Its pathway is nitrogen metabolism; urea degradation; CO(2) and NH(3) from urea (urease route): step 1/1. This is Urease subunit alpha from Staphylococcus saprophyticus subsp. saprophyticus (strain ATCC 15305 / DSM 20229 / NCIMB 8711 / NCTC 7292 / S-41).